The sequence spans 500 residues: L-arabinose isomerase (500 aa).

Positions 306, 333, 350, and 450 each coordinate Mn(2+).

It belongs to the arabinose isomerase family. As to quaternary structure, homohexamer. Requires Mn(2+) as cofactor.

The catalysed reaction is beta-L-arabinopyranose = L-ribulose. It functions in the pathway carbohydrate degradation; L-arabinose degradation via L-ribulose; D-xylulose 5-phosphate from L-arabinose (bacterial route): step 1/3. In terms of biological role, catalyzes the conversion of L-arabinose to L-ribulose. In Salmonella enteritidis PT4 (strain P125109), this protein is L-arabinose isomerase.